Here is a 285-residue protein sequence, read N- to C-terminus: CCR4-NOT transcription complex subunit 7 (285 aa).

Asp40, Glu42, Asp161, Asp230, and Glu278 together coordinate a divalent metal cation.

Belongs to the CAF1 family. Component of the CCR4-NOT complex. Requires Mn(2+) as cofactor. It depends on Mg(2+) as a cofactor. Co(2+) serves as cofactor.

The protein resides in the nucleus. It localises to the cytoplasm. It carries out the reaction Exonucleolytic cleavage of poly(A) to 5'-AMP.. Functionally, has 3'-5' poly(A) exoribonuclease activity for synthetic poly(A) RNA substrate. Catalytic component of the CCR4-NOT complex which is one of the major cellular mRNA deadenylases and is linked to various cellular processes including bulk mRNA degradation, miRNA-mediated repression, translational repression during translational initiation and general transcription regulation. During miRNA-mediated repression the complex also seems to act as translational repressor during translational initiation. Additional complex functions may be a consequence of its influence on mRNA expression. The chain is CCR4-NOT transcription complex subunit 7 (cnot7) from Xenopus laevis (African clawed frog).